Here is a 62-residue protein sequence, read N- to C-terminus: Disintegrin atropoimin (62 aa).

One can recognise a Disintegrin domain in the interval 1-62; that stretch reads EAGEECDCGT…ADCPRNGLYG (62 aa). Cystine bridges form between Cys-6–Cys-21, Cys-8–Cys-16, Cys-15–Cys-38, Cys-29–Cys-35, and Cys-34–Cys-48. Positions 41–42 match the Cell attachment site motif; the sequence is GD.

It belongs to the venom metalloproteinase (M12B) family. P-II subfamily. P-IIa sub-subfamily. In terms of assembly, monomer. As to expression, expressed by the venom gland.

The protein localises to the secreted. Functionally, inhibits ADP- (IC(50)=63 nM) and collagen-induced (IC(50)=53 nM) aggregation of human platelets. In vitro, inhibits adhesion of endothelial cells to vitronectin, type-I collagen and, to a lower degree, fibronectin and laminin. The protein is Disintegrin atropoimin of Metlapilcoatlus mexicanus (Central American jumping pitviper).